The primary structure comprises 126 residues: Aspartate 1-decarboxylase (126 aa).

Ser25 (schiff-base intermediate with substrate; via pyruvic acid) is an active-site residue. Pyruvic acid (Ser) is present on Ser25. A substrate-binding site is contributed by Thr57. Residue Tyr58 is the Proton donor of the active site. 73 to 75 contacts substrate; it reads GGA.

Belongs to the PanD family. Heterooctamer of four alpha and four beta subunits. The cofactor is pyruvate. Is synthesized initially as an inactive proenzyme, which is activated by self-cleavage at a specific serine bond to produce a beta-subunit with a hydroxyl group at its C-terminus and an alpha-subunit with a pyruvoyl group at its N-terminus.

It is found in the cytoplasm. The enzyme catalyses L-aspartate + H(+) = beta-alanine + CO2. The protein operates within cofactor biosynthesis; (R)-pantothenate biosynthesis; beta-alanine from L-aspartate: step 1/1. Catalyzes the pyruvoyl-dependent decarboxylation of aspartate to produce beta-alanine. The sequence is that of Aspartate 1-decarboxylase from Xylella fastidiosa (strain Temecula1 / ATCC 700964).